The primary structure comprises 1216 residues: 1-phosphatidylinositol 4,5-bisphosphate phosphodiesterase beta-1 (1216 aa).

The S-palmitoyl cysteine moiety is linked to residue cysteine 17. Phosphoserine is present on serine 236. A PI-PLC X-box domain is found at 316-467 (EDMSQPLSHY…LMYKILVKNK (152 aa)). Active-site residues include histidine 331 and histidine 378. Serine 417 is subject to Phosphoserine. A disordered region spans residues 469–534 (KSHKSSEGSG…MDEGTAGSEA (66 aa)). A compositionally biased stretch (basic and acidic residues) spans 472 to 483 (KSSEGSGKKKLS). Low complexity predominate over residues 491-501 (SDSSSVFEPSS). Acidic residues predominate over residues 507 to 518 (ADTESDDDDDDD). At threonine 509 the chain carries Phosphothreonine. Phosphoserine occurs at positions 511 and 582. Residues 540 to 656 (MSNLVNYIQP…GYRLKPEFMR (117 aa)) enclose the PI-PLC Y-box domain. One can recognise a C2 domain in the interval 656–786 (RRPDKHFDPF…RNERNQPLTL (131 aa)). 4 disordered regions span residues 834–891 (DEEE…VKAP), 967–989 (EKSA…GSSA), 1072–1095 (MDKK…EEEK), and 1173–1216 (ISED…DTPL). Residues 846–868 (ETSSEAPSETRTTPAENGVNHTA) are compositionally biased toward polar residues. A Phosphoserine; by PKC modification is found at serine 887. Residues 967-979 (EKSAKKDSKKKSE) are compositionally biased toward basic and acidic residues. Phosphoserine is present on residues serine 978 and serine 987. Residues 1075 to 1095 (KRQEKITEAKSKDKSQMEEEK) are compositionally biased toward basic and acidic residues. Phosphoserine is present on residues serine 1197, serine 1199, and serine 1200. Basic and acidic residues predominate over residues 1205 to 1216 (RENPGREFDTPL).

In terms of assembly, interacts with DGKQ. It depends on Ca(2+) as a cofactor. Palmitoylated. Palmitoylation at Cys-17 by ZDHHC21 regulates the signaling activity of PLCB1 and the function of the endothelial barrier. Palmitoylation by ZDHHC21 is stimulated by inflammation.

Its subcellular location is the nucleus membrane. The protein localises to the cytoplasm. The enzyme catalyses a 1,2-diacyl-sn-glycero-3-phospho-(1D-myo-inositol-4,5-bisphosphate) + H2O = 1D-myo-inositol 1,4,5-trisphosphate + a 1,2-diacyl-sn-glycerol + H(+). The catalysed reaction is a 1,2-diacyl-sn-glycero-3-phospho-(1D-myo-inositol) + H2O = 1D-myo-inositol 1-phosphate + a 1,2-diacyl-sn-glycerol + H(+). In terms of biological role, catalyzes the hydrolysis of 1-phosphatidylinositol 4,5-bisphosphate into diacylglycerol (DAG) and inositol 1,4,5-trisphosphate (IP3) and mediates intracellular signaling downstream of G protein-coupled receptors. Regulates the function of the endothelial barrier. The polypeptide is 1-phosphatidylinositol 4,5-bisphosphate phosphodiesterase beta-1 (Mus musculus (Mouse)).